We begin with the raw amino-acid sequence, 166 residues long: Small ribosomal subunit protein uS5 (166 aa).

The S5 DRBM domain occupies 12–75; sequence YIEKLVQVNR…EAARRNMIQV (64 aa).

It belongs to the universal ribosomal protein uS5 family. As to quaternary structure, part of the 30S ribosomal subunit. Contacts proteins S4 and S8.

In terms of biological role, with S4 and S12 plays an important role in translational accuracy. Its function is as follows. Located at the back of the 30S subunit body where it stabilizes the conformation of the head with respect to the body. This chain is Small ribosomal subunit protein uS5, found in Pseudomonas putida (strain ATCC 700007 / DSM 6899 / JCM 31910 / BCRC 17059 / LMG 24140 / F1).